Here is a 483-residue protein sequence, read N- to C-terminus: Cobyric acid synthase (483 aa).

The 188-residue stretch at A251–F438 folds into the GATase cobBQ-type domain. C333 acts as the Nucleophile in catalysis. H430 is a catalytic residue.

Belongs to the CobB/CobQ family. CobQ subfamily.

The protein operates within cofactor biosynthesis; adenosylcobalamin biosynthesis. In terms of biological role, catalyzes amidations at positions B, D, E, and G on adenosylcobyrinic A,C-diamide. NH(2) groups are provided by glutamine, and one molecule of ATP is hydrogenolyzed for each amidation. The protein is Cobyric acid synthase of Brucella suis biovar 1 (strain 1330).